The chain runs to 156 residues: Arginine repressor (156 aa).

It belongs to the ArgR family.

It is found in the cytoplasm. It participates in amino-acid biosynthesis; L-arginine biosynthesis [regulation]. Regulates arginine biosynthesis genes. In Citrobacter koseri (strain ATCC BAA-895 / CDC 4225-83 / SGSC4696), this protein is Arginine repressor.